The primary structure comprises 608 residues: UvrABC system protein C (608 aa).

In terms of domain architecture, GIY-YIG spans 13–91; it reads HDAGVYRMYD…IKTYQPRYNV (79 aa). Positions 201 to 236 constitute a UVR domain; it reads QQVLEHLIHKMEQASLALDFEEAARIRDQIQAVRAV.

This sequence belongs to the UvrC family. In terms of assembly, interacts with UvrB in an incision complex.

It is found in the cytoplasm. The UvrABC repair system catalyzes the recognition and processing of DNA lesions. UvrC both incises the 5' and 3' sides of the lesion. The N-terminal half is responsible for the 3' incision and the C-terminal half is responsible for the 5' incision. The sequence is that of UvrABC system protein C from Pasteurella multocida (strain Pm70).